The sequence spans 236 residues: Demethylmenaquinone methyltransferase (236 aa).

Residues Thr58, Asp79, and 106–107 (NA) contribute to the S-adenosyl-L-methionine site.

This sequence belongs to the class I-like SAM-binding methyltransferase superfamily. MenG/UbiE family.

The catalysed reaction is a 2-demethylmenaquinol + S-adenosyl-L-methionine = a menaquinol + S-adenosyl-L-homocysteine + H(+). Its pathway is quinol/quinone metabolism; menaquinone biosynthesis; menaquinol from 1,4-dihydroxy-2-naphthoate: step 2/2. Methyltransferase required for the conversion of demethylmenaquinol (DMKH2) to menaquinol (MKH2). The protein is Demethylmenaquinone methyltransferase of Alkalihalophilus pseudofirmus (strain ATCC BAA-2126 / JCM 17055 / OF4) (Bacillus pseudofirmus).